We begin with the raw amino-acid sequence, 335 residues long: Histidinol-phosphatase (335 aa).

The protein belongs to the PHP hydrolase family. HisK subfamily.

It carries out the reaction L-histidinol phosphate + H2O = L-histidinol + phosphate. It participates in amino-acid biosynthesis; L-histidine biosynthesis; L-histidine from 5-phospho-alpha-D-ribose 1-diphosphate: step 8/9. In Saccharomyces cerevisiae (strain ATCC 204508 / S288c) (Baker's yeast), this protein is Histidinol-phosphatase (HIS2).